Here is a 327-residue protein sequence, read N- to C-terminus: Putative gluconeogenesis factor (327 aa).

The protein belongs to the gluconeogenesis factor family.

It is found in the cytoplasm. Functionally, required for morphogenesis under gluconeogenic growth conditions. In Lactococcus lactis subsp. lactis (strain IL1403) (Streptococcus lactis), this protein is Putative gluconeogenesis factor (yjiF).